Reading from the N-terminus, the 950-residue chain is Serine/threonine-protein kinase 10-A (950 aa).

The 259-residue stretch at 36–294 (WEIIGELGDG…AAQLLEHPFV (259 aa)) folds into the Protein kinase domain. ATP-binding positions include 42 to 50 (LGDGAFGKV) and Lys65. Asp157 functions as the Proton acceptor in the catalytic mechanism. Residues 319-331 (EEQGEAEEEEDSD) show a composition bias toward acidic residues. The disordered stretch occupies residues 319–478 (EEQGEAEEEE…DSGSNSASES (160 aa)). Positions 347-356 (EIGKDIEREQ) are enriched in basic and acidic residues. The segment covering 365–382 (SATSPQKTDSQADNYSQR) has biased composition (polar residues). The segment covering 416–432 (EPKRNSTAESYRGEEHS) has biased composition (basic and acidic residues). Residues 433–445 (SASSQRQRSAQSA) show a composition bias toward low complexity. A compositionally biased stretch (polar residues) spans 452-463 (SFDSPTRYFTNW). 3 positions are modified to phosphoserine; by PLK1: Ser482, Ser486, and Ser490. Residues 634–786 (IKFLEQLKLR…QLRLRQQQEK (153 aa)) adopt a coiled-coil conformation.

Belongs to the protein kinase superfamily. STE Ser/Thr protein kinase family. STE20 subfamily. Homodimer. Post-translationally, autophosphorylates. Phosphorylated by plk1/plx1, suggesting the existence of a feedback loop with plk1/plx1. activation of the protein.

Its subcellular location is the cell membrane. It carries out the reaction L-seryl-[protein] + ATP = O-phospho-L-seryl-[protein] + ADP + H(+). The enzyme catalyses L-threonyl-[protein] + ATP = O-phospho-L-threonyl-[protein] + ADP + H(+). In terms of biological role, may act as a polo kinase kinase by mediating phosphorylation of plk1/plx1 and subsequent activation of plk1/plx1 during oocyte maturation. In Xenopus laevis (African clawed frog), this protein is Serine/threonine-protein kinase 10-A (stk10-a).